The following is a 206-amino-acid chain: MAVVKVYDQNKQEAGEITLAPEVFEVEVRPEILHLVVRAQRAAFRAGTHATKTRAFVSGGGLKPWRQKGTGRARAGSIRSPLWRGGAIIFGPQPRDYEFKVNKKVRKLALRMALSSRLAGSNLLVVKGFELPEVKTKLFAKIADTLGLDKALIIAPEENTTLALSVRNIPGITIATPEQLSVYEILKHKQLVLVEGAVASVQDRLK.

It belongs to the universal ribosomal protein uL4 family. Part of the 50S ribosomal subunit.

One of the primary rRNA binding proteins, this protein initially binds near the 5'-end of the 23S rRNA. It is important during the early stages of 50S assembly. It makes multiple contacts with different domains of the 23S rRNA in the assembled 50S subunit and ribosome. In terms of biological role, forms part of the polypeptide exit tunnel. This Nitratidesulfovibrio vulgaris (strain ATCC 29579 / DSM 644 / CCUG 34227 / NCIMB 8303 / VKM B-1760 / Hildenborough) (Desulfovibrio vulgaris) protein is Large ribosomal subunit protein uL4.